The chain runs to 438 residues: Histidine--tRNA ligase (438 aa).

This sequence belongs to the class-II aminoacyl-tRNA synthetase family. In terms of assembly, homodimer.

Its subcellular location is the cytoplasm. The enzyme catalyses tRNA(His) + L-histidine + ATP = L-histidyl-tRNA(His) + AMP + diphosphate + H(+). The chain is Histidine--tRNA ligase (hisS) from Thermobifida fusca (strain YX).